An 82-amino-acid chain; its full sequence is MSYEKVLQAGKIVIGTKQTIRALKEGKAAEVIVAEDADLPIIEKVMAAANEANVPITKVDSMKKLGKACKIQVGAAAVAILR.

Belongs to the eukaryotic ribosomal protein eL8 family.

This chain is RNA-binding protein GTNG_0100, found in Geobacillus thermodenitrificans (strain NG80-2).